Reading from the N-terminus, the 314-residue chain is Formimidoylglutamase (314 aa).

Residues His127, Asp153, His155, Asp157, Asp245, and Asp247 each coordinate Mn(2+).

This sequence belongs to the arginase family. Mn(2+) serves as cofactor.

The catalysed reaction is N-formimidoyl-L-glutamate + H2O = formamide + L-glutamate. The protein operates within amino-acid degradation; L-histidine degradation into L-glutamate; L-glutamate from N-formimidoyl-L-glutamate (hydrolase route): step 1/1. Its function is as follows. Catalyzes the conversion of N-formimidoyl-L-glutamate to L-glutamate and formamide. The polypeptide is Formimidoylglutamase (Aeromonas salmonicida (strain A449)).